The primary structure comprises 355 residues: Glucokinase (355 aa).

11 to 16 (GDIGGT) provides a ligand contact to ATP.

It belongs to the bacterial glucokinase family.

The protein localises to the cytoplasm. The catalysed reaction is D-glucose + ATP = D-glucose 6-phosphate + ADP + H(+). This is Glucokinase from Synechocystis sp. (strain ATCC 27184 / PCC 6803 / Kazusa).